The following is a 539-amino-acid chain: Protoporphyrinogen oxidase (539 aa).

Residues 18–23, 43–44, Trp51, 70–73, Val300, and 521–523 each bind FAD; these read GGGVSG, ES, GPRT, and PGV.

It belongs to the protoporphyrinogen/coproporphyrinogen oxidase family. Protoporphyrinogen oxidase subfamily. FAD serves as cofactor.

The protein localises to the mitochondrion inner membrane. It carries out the reaction protoporphyrinogen IX + 3 O2 = protoporphyrin IX + 3 H2O2. Its pathway is porphyrin-containing compound metabolism; protoporphyrin-IX biosynthesis; protoporphyrin-IX from protoporphyrinogen-IX: step 1/1. In terms of biological role, catalyzes the 6-electron oxidation of protoporphyrinogen-IX to form protoporphyrin-IX. The polypeptide is Protoporphyrinogen oxidase (Saccharomyces cerevisiae (strain ATCC 204508 / S288c) (Baker's yeast)).